Consider the following 360-residue polypeptide: uncharacterized protein (360 aa).

3 Solcar repeats span residues 34 to 153 (VGVL…LSVW), 172 to 256 (PDWS…FKTN), and 266 to 355 (NPFV…FKFL). 6 helical membrane passes run 40–60 (VSAS…LDVV), 125–145 (LWSG…FYFT), 178–198 (AVAG…IEMI), 225–247 (ISSF…GIYW), 269–289 (VVSF…THPF), and 327–348 (FSSG…MISF).

It belongs to the mitochondrial carrier (TC 2.A.29) family.

Its subcellular location is the mitochondrion inner membrane. This is an uncharacterized protein from Caenorhabditis elegans.